The following is a 472-amino-acid chain: tRNA modification GTPase MnmE (472 aa).

(6S)-5-formyl-5,6,7,8-tetrahydrofolate contacts are provided by Arg28, Glu91, and Lys130. Residues 225-391 (GAKVVLAGKT…LSEKAYSVLA (167 aa)) form the TrmE-type G domain. Asn235 lines the K(+) pocket. Residues 235–240 (NAGKSS), 254–260 (SDIHGTT), and 279–282 (DTAG) contribute to the GTP site. Ser239 provides a ligand contact to Mg(2+). Ser254, Ile256, and Thr259 together coordinate K(+). Thr260 provides a ligand contact to Mg(2+). A (6S)-5-formyl-5,6,7,8-tetrahydrofolate-binding site is contributed by Lys472.

The protein belongs to the TRAFAC class TrmE-Era-EngA-EngB-Septin-like GTPase superfamily. TrmE GTPase family. Homodimer. Heterotetramer of two MnmE and two MnmG subunits. Requires K(+) as cofactor.

It localises to the cytoplasm. Functionally, exhibits a very high intrinsic GTPase hydrolysis rate. Involved in the addition of a carboxymethylaminomethyl (cmnm) group at the wobble position (U34) of certain tRNAs, forming tRNA-cmnm(5)s(2)U34. This chain is tRNA modification GTPase MnmE, found in Treponema denticola (strain ATCC 35405 / DSM 14222 / CIP 103919 / JCM 8153 / KCTC 15104).